We begin with the raw amino-acid sequence, 242 residues long: Ribose-5-phosphate isomerase A (242 aa).

Residues 39–42 (SGST), 95–98 (DGAD), and 108–111 (KGGG) contribute to the substrate site. The active-site Proton acceptor is the Glu117. Substrate is bound at residue Lys135.

This sequence belongs to the ribose 5-phosphate isomerase family. Homodimer.

It catalyses the reaction aldehydo-D-ribose 5-phosphate = D-ribulose 5-phosphate. The protein operates within carbohydrate degradation; pentose phosphate pathway; D-ribose 5-phosphate from D-ribulose 5-phosphate (non-oxidative stage): step 1/1. In terms of biological role, catalyzes the reversible conversion of ribose-5-phosphate to ribulose 5-phosphate. This is Ribose-5-phosphate isomerase A from Chlamydia trachomatis serovar L2 (strain ATCC VR-902B / DSM 19102 / 434/Bu).